The sequence spans 193 residues: Der GTPase-activating protein YihI (193 aa).

The segment covering 1–12 (MSAKQPNRKPTG) has biased composition (basic residues). Disordered regions lie at residues 1 to 91 (MSAK…KLVM) and 143 to 193 (IIDN…PKKK). The span at 13–26 (KRKESDASALDGRE) shows a compositional bias: basic and acidic residues. Basic residues predominate over residues 27 to 36 (RKRAAKRKGL). A compositionally biased stretch (polar residues) spans 40 to 54 (SRQQAEQSSKNNNGK). Over residues 145-160 (DNDDDEEDDGSFDDAS) the composition is skewed to acidic residues. Positions 184 to 193 (PEPKPEPKKK) are enriched in basic and acidic residues.

The protein belongs to the YihI family. As to quaternary structure, interacts with Der.

Functionally, a GTPase-activating protein (GAP) that modifies Der/EngA GTPase function. May play a role in ribosome biogenesis. In Aeromonas salmonicida (strain A449), this protein is Der GTPase-activating protein YihI.